The primary structure comprises 326 residues: MREVLLSECIDLLYESHFVISKPFGRSCFDLIAKKADLRFLIKILKNIDSLSTEQSEELLNIAKMLQAVPIIIGTRTRNSVMEEGAVYERYGIKAVTFNTFRDQLFGEPPVVYANRGGFFVNIDGAVLRETREKLKISVGELAEISRVSRKTIYKYEQNEANPSAEVAIKIEEYLDVPLIKGINIVDYMEGLKSQKSREEAFEKILKESEDFKIRVIDILGDMGFNLLETTKAPFDAVAEESKEDDSENQNIIFTNIQETENEEIRRKAMIVDEISKMLNSHSLLVLEKKTNENKRITSMSISELEKIGDTVDLLEFIEKKKKSTK.

One can recognise an HTH cro/C1-type domain in the interval 128–183 (LRETREKLKISVGELAEISRVSRKTIYKYEQNEANPSAEVAIKIEEYLDVPLIKGI). The H-T-H motif DNA-binding region spans 139–158 (VGELAEISRVSRKTIYKYEQ).

In Methanococcus maripaludis (strain C5 / ATCC BAA-1333), this protein is Putative HTH-type transcriptional regulatory protein MmarC5_0898.